Here is a 147-residue protein sequence, read N- to C-terminus: 3-dehydroquinate dehydratase (147 aa).

Residue Y23 is the Proton acceptor of the active site. Positions 75, 81, and 88 each coordinate substrate. Catalysis depends on H101, which acts as the Proton donor. Residues 102 to 103 (LS) and R112 contribute to the substrate site.

It belongs to the type-II 3-dehydroquinase family. As to quaternary structure, homododecamer.

It carries out the reaction 3-dehydroquinate = 3-dehydroshikimate + H2O. It functions in the pathway metabolic intermediate biosynthesis; chorismate biosynthesis; chorismate from D-erythrose 4-phosphate and phosphoenolpyruvate: step 3/7. Its function is as follows. Catalyzes a trans-dehydration via an enolate intermediate. The protein is 3-dehydroquinate dehydratase of Nitrosococcus oceani (strain ATCC 19707 / BCRC 17464 / JCM 30415 / NCIMB 11848 / C-107).